Reading from the N-terminus, the 313-residue chain is Olfactory receptor 4M2 (313 aa).

Residues 1–25 (METANYTKVTEFVLTGLSQTPEVQL) lie on the Cytoplasmic side of the membrane. Residues 26–46 (VLFVIFLSFYLFILPGNILII) form a helical membrane-spanning segment. Over 47–57 (CTISLDPHLTS) the chain is Extracellular. The chain crosses the membrane as a helical span at residues 58–78 (PMYFLLANLAFLDIWYSSITA). The Cytoplasmic portion of the chain corresponds to 79–97 (PEMLIDFFVERKIISFDEC). Cysteines 97 and 179 form a disulfide. The chain crosses the membrane as a helical span at residues 98–118 (IAQLFFLHFAGASEMFLLTVM). The Extracellular portion of the chain corresponds to 119-142 (AFDLYTAICRPLHYATIMNQRLCC). The helical transmembrane segment at 143–163 (ILVALSWRGGFIHSIIQVALI) threads the bilayer. Residues 164-204 (VRLPFCGPNELDSYFCDITQVVRIACANTFPEELVMICSSG) are Cytoplasmic-facing. Residues 205 to 225 (LISVVCLIALLMSYAFLLALL) traverse the membrane as a helical segment. Over 226–238 (KKLSGSGENTNRA) the chain is Extracellular. Residues 239–259 (VSTCYSHITIVVLMFGPSIYI) form a helical membrane-spanning segment. Topologically, residues 260-270 (YARPFDSFSLD) are cytoplasmic. Residues 271-291 (KVVSVFNTLIFPLHNPIIYTL) traverse the membrane as a helical segment. Over 292-313 (RNKEVKAAMRKLVTKYILCKEK) the chain is Extracellular.

This sequence belongs to the G-protein coupled receptor 1 family.

Its subcellular location is the membrane. Functionally, odorant receptor. The protein is Olfactory receptor 4M2 of Homo sapiens (Human).